Here is a 163-residue protein sequence, read N- to C-terminus: Sorting nexin-3 (163 aa).

The interval 1-20 (MASDQDNSGLDAPGSQFHRP) is disordered. The PX domain maps to 42–159 (NFLEIEVRNP…AAFVQDPNWD (118 aa)). A 1,2-diacyl-sn-glycero-3-phospho-(1D-myo-inositol-3-phosphate) is bound by residues arginine 85, serine 87, lysine 111, arginine 116, and arginine 125.

It belongs to the sorting nexin family.

The protein localises to the cytoplasm. Its subcellular location is the golgi apparatus membrane. It is found in the prevacuolar compartment membrane. Its function is as follows. Required for retention of late Golgi membrane proteins. Component of the retrieval machinery that functions by direct interaction with the cytosolic tails of certain TGN membrane proteins during the sorting/budding process at the prevacuolar compartment. Binds phosphatidylinositol 3-phosphate (PtdIns(P3)). The sequence is that of Sorting nexin-3 (SNX3) from Gibberella zeae (strain ATCC MYA-4620 / CBS 123657 / FGSC 9075 / NRRL 31084 / PH-1) (Wheat head blight fungus).